We begin with the raw amino-acid sequence, 89 residues long: Teretoxin Tan6.8 (89 aa).

A signal peptide spans 1 to 21 (MRLLLILLLLTPVILAGSLDE). Residues 22–42 (EPNNADGANAASFTADQEGRH) are disordered. Residues 22–44 (EPNNADGANAASFTADQEGRHKR) constitute a propeptide that is removed on maturation.

In terms of processing, contains 3 disulfide bonds. Expressed by the venom duct.

It localises to the secreted. The sequence is that of Teretoxin Tan6.8 from Terebra anilis (Auger snail).